The chain runs to 288 residues: Pantothenate synthetase (288 aa).

An ATP-binding site is contributed by methionine 30–histidine 37. The active-site Proton donor is the histidine 37. Position 61 (glutamine 61) interacts with (R)-pantoate. Glutamine 61 contributes to the beta-alanine binding site. ATP is bound at residue glycine 147–aspartate 150. Glutamine 153 is a (R)-pantoate binding site. ATP is bound by residues leucine 176 and isoleucine 184–arginine 187.

The protein belongs to the pantothenate synthetase family. In terms of assembly, homodimer.

Its subcellular location is the cytoplasm. It catalyses the reaction (R)-pantoate + beta-alanine + ATP = (R)-pantothenate + AMP + diphosphate + H(+). Its pathway is cofactor biosynthesis; (R)-pantothenate biosynthesis; (R)-pantothenate from (R)-pantoate and beta-alanine: step 1/1. Functionally, catalyzes the condensation of pantoate with beta-alanine in an ATP-dependent reaction via a pantoyl-adenylate intermediate. The protein is Pantothenate synthetase of Prosthecochloris aestuarii (strain DSM 271 / SK 413).